The following is a 190-amino-acid chain: Capsid protein (190 aa).

The disordered stretch occupies residues 1-24; it reads MSTVGTGKLTRAQRRAAARKNKRN. Position 2 is an N-acetylserine; by host (S2). The span at 11 to 24 shows a compositional bias: basic residues; sequence RAQRRAAARKNKRN.

It belongs to the bromovirus capsid protein family.

It localises to the virion. In terms of biological role, capsid protein. Probably binds RNA and plays a role in packaging. This Cowpea chlorotic mottle virus (CCMV) protein is Capsid protein.